The sequence spans 198 residues: Copy number protein (198 aa).

Its subcellular location is the cell membrane. Involved in copy number control of pIP404. This basic and hydrophobic protein may exert its effect from the cytoplasmic membrane. This is Copy number protein (cop) from Clostridium perfringens.